We begin with the raw amino-acid sequence, 163 residues long: 6,7-dimethyl-8-ribityllumazine synthase (163 aa).

5-amino-6-(D-ribitylamino)uracil-binding positions include Phe22, 56–58, and 80–82; these read TFE and AVI. Position 85 to 86 (85 to 86) interacts with (2S)-2-hydroxy-3-oxobutyl phosphate; it reads GT. His88 serves as the catalytic Proton donor. Met113 serves as a coordination point for 5-amino-6-(D-ribitylamino)uracil. Residue Arg127 coordinates (2S)-2-hydroxy-3-oxobutyl phosphate.

Belongs to the DMRL synthase family.

It carries out the reaction (2S)-2-hydroxy-3-oxobutyl phosphate + 5-amino-6-(D-ribitylamino)uracil = 6,7-dimethyl-8-(1-D-ribityl)lumazine + phosphate + 2 H2O + H(+). Its pathway is cofactor biosynthesis; riboflavin biosynthesis; riboflavin from 2-hydroxy-3-oxobutyl phosphate and 5-amino-6-(D-ribitylamino)uracil: step 1/2. Its function is as follows. Catalyzes the formation of 6,7-dimethyl-8-ribityllumazine by condensation of 5-amino-6-(D-ribitylamino)uracil with 3,4-dihydroxy-2-butanone 4-phosphate. This is the penultimate step in the biosynthesis of riboflavin. The chain is 6,7-dimethyl-8-ribityllumazine synthase from Anaeromyxobacter sp. (strain Fw109-5).